The sequence spans 228 residues: Sec-independent protein translocase protein TatB (228 aa).

The helical transmembrane segment at 1 to 21 (MFDFGLGELIFVGIIALIVLG) threads the bilayer. Disordered stretches follow at residues 106 to 164 (TPAD…TDKD) and 196 to 228 (VPHTTSLRKQAINRKRDFRPKHRAKPKLRVRKS). Basic and acidic residues predominate over residues 135-151 (PSERSDTSAETLGDDRQ). Positions 206–228 (AINRKRDFRPKHRAKPKLRVRKS) are enriched in basic residues.

It belongs to the TatB family. As to quaternary structure, the Tat system comprises two distinct complexes: a TatABC complex, containing multiple copies of TatA, TatB and TatC subunits, and a separate TatA complex, containing only TatA subunits. Substrates initially bind to the TatABC complex, which probably triggers association of the separate TatA complex to form the active translocon.

It is found in the cell inner membrane. Part of the twin-arginine translocation (Tat) system that transports large folded proteins containing a characteristic twin-arginine motif in their signal peptide across membranes. Together with TatC, TatB is part of a receptor directly interacting with Tat signal peptides. TatB may form an oligomeric binding site that transiently accommodates folded Tat precursor proteins before their translocation. The polypeptide is Sec-independent protein translocase protein TatB (Neisseria gonorrhoeae (strain ATCC 700825 / FA 1090)).